We begin with the raw amino-acid sequence, 58 residues long: Small ribosomal subunit protein bS21B (58 aa).

The protein belongs to the bacterial ribosomal protein bS21 family.

The protein is Small ribosomal subunit protein bS21B (rpsU2) of Nostoc sp. (strain PCC 7120 / SAG 25.82 / UTEX 2576).